The sequence spans 49 residues: Large ribosomal subunit protein eL40 (49 aa).

Belongs to the eukaryotic ribosomal protein eL40 family.

In Halorubrum lacusprofundi (strain ATCC 49239 / DSM 5036 / JCM 8891 / ACAM 34), this protein is Large ribosomal subunit protein eL40.